Consider the following 116-residue polypeptide: Putative pterin-4-alpha-carbinolamine dehydratase (116 aa).

Belongs to the pterin-4-alpha-carbinolamine dehydratase family.

It carries out the reaction (4aS,6R)-4a-hydroxy-L-erythro-5,6,7,8-tetrahydrobiopterin = (6R)-L-erythro-6,7-dihydrobiopterin + H2O. In Microcystis aeruginosa (strain NIES-843 / IAM M-2473), this protein is Putative pterin-4-alpha-carbinolamine dehydratase.